We begin with the raw amino-acid sequence, 451 residues long: MTKKRKLESESNETSEPTEKQQQQCEKEDPEIRNVDNQRDDDEQVVEQDTLKEMHEEEAKGEDNIEAETSSGSGNQGNEDDDEEEPIEDLLEPFSKDQLLILLKEAAERHRDVANRIRIVADEDLVHRKIFVHGLGWDTKADSLIDAFKQYGEIEDCKCVVDKVSGQSKGYGFILFKSRSGARNALKQPQKKIGTRMTACQLASIGPVQGNPVVAPAQHFNPENVQRKIYVSNVSADIDPQKLLEFFSRFGEIEEGPLGLDKATGRPKGFALFVYRSLESAKKALEEPHKTFEGHVLHCHKANDGPKQVKQHQHNHNSHNQNSRYQRNDNNGYGAPGGHGHFIAGNNQAVQAFNPAIGQALTALLASQGAGLGLNQAFGQALLGTLGTASPGAVGGMPSGYGTQANISPGVYPGYGAQAGYQGGYQTQQPGQGGAGRGQHGAGYGGPYMGR.

Positions 1 to 86 (MTKKRKLESE…GNEDDDEEEP (86 aa)) are disordered. Basic and acidic residues-rich tracts occupy residues 25–38 (CEKE…VDNQ) and 49–63 (DTLK…KGED). A compositionally biased stretch (polar residues) spans 67 to 77 (AETSSGSGNQG). 2 RRM domains span residues 128–236 (RKIF…NVSA) and 227–314 (RKIY…QHQH). Disordered regions lie at residues 302–335 (ANDG…GYGA) and 423–451 (GGYQ…YMGR). Over residues 431–451 (GQGGAGRGQHGAGYGGPYMGR) the composition is skewed to gly residues.

In terms of tissue distribution, expressed in shoot meristem and flowers.

The protein resides in the nucleus. Functionally, heterogeneous nuclear ribonucleoprotein (hnRNP)-like protein that acts as a component of a complex regulating the turnover of mRNAs in the nucleus. Binds with high affinity to RNA molecules that contain U-rich sequences in 3'-UTRs. May function in complex with UBP1 and contribute to the stabilization of mRNAs in the nucleus. The sequence is that of UBP1-associated protein 2B (UBA2B) from Arabidopsis thaliana (Mouse-ear cress).